A 246-amino-acid chain; its full sequence is Transcriptional regulatory protein LytR (246 aa).

Positions Lys-2–Arg-116 constitute a Response regulatory domain. Asp-53 carries the 4-aspartylphosphate modification. The region spanning Leu-141–Leu-245 is the HTH LytTR-type domain.

Homodimer; when phosphorylated. Phosphorylated and dephosphorylated by LytS.

It localises to the cytoplasm. Its function is as follows. Member of the two-component regulatory system LytR/LytS that regulates genes involved in autolysis, programmed cell death, biofilm formation and cell wall metabolism. Also participates in sensing and responding to host defense cationic antimicrobial peptides (HDPs). Upon phosphorylation by LytS, functions as a transcription regulator by direct binding to promoter regions of target genes including lrgA and lrgB, to positively regulate their expression. The protein is Transcriptional regulatory protein LytR (lytR) of Staphylococcus aureus (strain MW2).